We begin with the raw amino-acid sequence, 304 residues long: Nod factor export ATP-binding protein I (304 aa).

The ABC transporter domain occupies 6–236; that stretch reads IDFQQVEKRY…EIGCDVIEIY (231 aa). 38 to 45 contributes to the ATP binding site; it reads GPNGAGKT.

This sequence belongs to the ABC transporter superfamily. Lipooligosaccharide exporter (TC 3.A.1.102) family. In terms of assembly, the complex is composed of two ATP-binding proteins (NodI) and two transmembrane proteins (NodJ).

The protein resides in the cell inner membrane. In terms of biological role, part of the ABC transporter complex NodIJ involved in the export of the nodulation factors (Nod factors), the bacterial signal molecules that induce symbiosis and subsequent nodulation induction. Nod factors are LCO (lipo-chitin oligosaccharide), a modified beta-1,4-linked N-acetylglucosamine oligosaccharide. This subunit is responsible for energy coupling to the transport system. In Burkholderia thailandensis (strain ATCC 700388 / DSM 13276 / CCUG 48851 / CIP 106301 / E264), this protein is Nod factor export ATP-binding protein I.